We begin with the raw amino-acid sequence, 883 residues long: Integrator complex subunit 6-B (883 aa).

In terms of domain architecture, VWFA spans 3–227; it reads ILLFLLDTSA…QCLESLVQKI (225 aa). The Inhibitory loop signature appears at 626 to 633; it reads MMIDEADE.

This sequence belongs to the Integrator subunit 6 family. Component of the Integrator complex, composed of core subunits INTS1, INTS2, INTS3, INTS4, INTS5, INTS6, INTS7, INTS8, INTS9/RC74, INTS10, INTS11/CPSF3L, INTS12, INTS13, INTS14 and INTS15. The core complex associates with protein phosphatase 2A subunits PPP2CA and PPP2R1A, to form the Integrator-PP2A (INTAC) complex.

It localises to the nucleus. The protein resides in the chromosome. Functionally, component of the integrator complex, a multiprotein complex that terminates RNA polymerase II (Pol II) transcription in the promoter-proximal region of genes. The integrator complex provides a quality checkpoint during transcription elongation by driving premature transcription termination of transcripts that are unfavorably configured for transcriptional elongation: the complex terminates transcription by (1) catalyzing dephosphorylation of the C-terminal domain (CTD) of Pol II subunit POLR2A/RPB1 and SUPT5H/SPT5, (2) degrading the exiting nascent RNA transcript via endonuclease activity and (3) promoting the release of Pol II from bound DNA. The integrator complex is also involved in terminating the synthesis of non-coding Pol II transcripts, such as enhancer RNAs (eRNAs), small nuclear RNAs (snRNAs), telomerase RNAs and long non-coding RNAs (lncRNAs). Within the integrator complex, INTS6 acts as a molecular adapter that promotes assembly of protein phosphatase 2A (PP2A) subunits to the integrator core complex, promoting recruitment of PP2A to transcription pause-release checkpoint. The protein is Integrator complex subunit 6-B (ints6-b) of Xenopus laevis (African clawed frog).